A 168-amino-acid chain; its full sequence is S-ribosylhomocysteine lyase (168 aa).

Histidine 54, histidine 58, and cysteine 128 together coordinate Fe cation.

It belongs to the LuxS family. Homodimer. Fe cation is required as a cofactor.

It catalyses the reaction S-(5-deoxy-D-ribos-5-yl)-L-homocysteine = (S)-4,5-dihydroxypentane-2,3-dione + L-homocysteine. Functionally, involved in the synthesis of autoinducer 2 (AI-2) which is secreted by bacteria and is used to communicate both the cell density and the metabolic potential of the environment. The regulation of gene expression in response to changes in cell density is called quorum sensing. Catalyzes the transformation of S-ribosylhomocysteine (RHC) to homocysteine (HC) and 4,5-dihydroxy-2,3-pentadione (DPD). The chain is S-ribosylhomocysteine lyase from Neisseria meningitidis serogroup C (strain 053442).